Consider the following 381-residue polypeptide: Putative heat shock protein HSP 90-beta 2 (381 aa).

Positions 46, 88, and 107 each coordinate ATP. Positions 145 to 174 are enriched in basic and acidic residues; that stretch reads KEISDGKAEEEKGEKEEENKDDEEKPKIED. Residues 145–192 are disordered; it reads KEISDGKAEEEKGEKEEENKDDEEKPKIEDVGSDEEDDSGKDKKKKTK. At Ser177 the chain carries Phosphoserine. Residues 315–347 are a coiled coil; sequence ELPEDGEEKKRMEERKAKFENLCKFMKETLDKK.

Belongs to the heat shock protein 90 family. As to quaternary structure, homodimer.

The protein resides in the cytoplasm. Its function is as follows. Putative molecular chaperone that may promote the maturation, structural maintenance and proper regulation of specific target proteins. The protein is Putative heat shock protein HSP 90-beta 2 (HSP90AB2P) of Homo sapiens (Human).